The sequence spans 367 residues: Carbamoyl-phosphate synthase (367 aa).

In terms of domain architecture, ATP-grasp spans 111–296 (KEFYNEIGVP…SLCELVNMAA (186 aa)). 137–186 (KMEFPVVLKQGQGQGGKDIKVAESLDDVKEYFEEFDHALCEKFIEGSEIS) provides a ligand contact to ATP. Mg(2+) contacts are provided by Asp253, Glu267, and Asn269. Positions 253, 267, and 269 each coordinate Mn(2+).

Belongs to the small carbamoyl-phosphate synthase family. As to quaternary structure, forms homodimers and homotetramers (dimers of dimers). Mg(2+) serves as cofactor. The cofactor is Mn(2+).

It catalyses the reaction hydrogencarbonate + NH4(+) + 2 ATP = carbamoyl phosphate + 2 ADP + phosphate + 2 H(+). In terms of biological role, catalyzes the synthesis of carbamoyl phosphate from ATP, ammonium and bicarbonate. Proceeds via a three-step mechanism, i.e. the phosphorylation of hydrogencarbonate to carboxyphosphate, a nucleophilic attack of ammonia on carboxyphosphate yielding carbamate, and the phosphorylation of carbamate forming carbamoyl phosphate. In M.smithii, the predominant archaeon in the human gut, one function of this enzyme may be to sequester ammonia, a scarce nutrient in the intestine which is the major source of nitrogen in M.smithii for the biosynthesis of nucleotides, amino acids, and many other metabolites. This Methanobrevibacter smithii (strain ATCC 35061 / DSM 861 / OCM 144 / PS) protein is Carbamoyl-phosphate synthase.